We begin with the raw amino-acid sequence, 301 residues long: tRNA dimethylallyltransferase 1 (301 aa).

Residue 11–18 participates in ATP binding; that stretch reads GPTGVGKT. 13–18 lines the substrate pocket; that stretch reads TGVGKT. Positions 36-39 are interaction with substrate tRNA; it reads DSRQ.

The protein belongs to the IPP transferase family. Monomer. Requires Mg(2+) as cofactor.

The enzyme catalyses adenosine(37) in tRNA + dimethylallyl diphosphate = N(6)-dimethylallyladenosine(37) in tRNA + diphosphate. Functionally, catalyzes the transfer of a dimethylallyl group onto the adenine at position 37 in tRNAs that read codons beginning with uridine, leading to the formation of N6-(dimethylallyl)adenosine (i(6)A). This Bacteroides fragilis (strain YCH46) protein is tRNA dimethylallyltransferase 1.